A 210-amino-acid polypeptide reads, in one-letter code: N-(5'-phosphoribosyl)anthranilate isomerase (210 aa).

This sequence belongs to the TrpF family.

The catalysed reaction is N-(5-phospho-beta-D-ribosyl)anthranilate = 1-(2-carboxyphenylamino)-1-deoxy-D-ribulose 5-phosphate. The protein operates within amino-acid biosynthesis; L-tryptophan biosynthesis; L-tryptophan from chorismate: step 3/5. The protein is N-(5'-phosphoribosyl)anthranilate isomerase of Staphylococcus aureus (strain bovine RF122 / ET3-1).